The following is a 753-amino-acid chain: Probable dipeptidyl peptidase 4 (753 aa).

The first 18 residues, 1–18 (MKTSQFLSLLLLAGIAQA), serve as a signal peptide directing secretion. Asparagine 84, asparagine 114, and asparagine 222 each carry an N-linked (GlcNAc...) asparagine glycan. Active-site charge relay system residues include serine 616, aspartate 668, and histidine 703.

It belongs to the peptidase S9B family.

Its subcellular location is the secreted. It carries out the reaction Release of an N-terminal dipeptide, Xaa-Yaa-|-Zaa-, from a polypeptide, preferentially when Yaa is Pro, provided Zaa is neither Pro nor hydroxyproline.. Its function is as follows. Extracellular dipeptidyl-peptidase which removes N-terminal dipeptides sequentially from polypeptides having unsubstituted N-termini provided that the penultimate residue is proline. Contributes to pathogenicity. In Trichophyton verrucosum (strain HKI 0517), this protein is Probable dipeptidyl peptidase 4 (DPP4).